The primary structure comprises 283 residues: Pantothenate synthetase (283 aa).

Position 30 to 37 (30 to 37 (MGYLHEGH)) interacts with ATP. His37 acts as the Proton donor in catalysis. Gln61 contributes to the (R)-pantoate binding site. Residue Gln61 coordinates beta-alanine. 147-150 (GLKD) is an ATP binding site. Residue Gln153 coordinates (R)-pantoate. Residues Val176 and 184-187 (KSSR) contribute to the ATP site.

This sequence belongs to the pantothenate synthetase family. In terms of assembly, homodimer.

It localises to the cytoplasm. The catalysed reaction is (R)-pantoate + beta-alanine + ATP = (R)-pantothenate + AMP + diphosphate + H(+). Its pathway is cofactor biosynthesis; (R)-pantothenate biosynthesis; (R)-pantothenate from (R)-pantoate and beta-alanine: step 1/1. Functionally, catalyzes the condensation of pantoate with beta-alanine in an ATP-dependent reaction via a pantoyl-adenylate intermediate. This chain is Pantothenate synthetase, found in Halalkalibacterium halodurans (strain ATCC BAA-125 / DSM 18197 / FERM 7344 / JCM 9153 / C-125) (Bacillus halodurans).